Here is a 199-residue protein sequence, read N- to C-terminus: N-(5'-phosphoribosyl)anthranilate isomerase (199 aa).

This sequence belongs to the TrpF family.

The catalysed reaction is N-(5-phospho-beta-D-ribosyl)anthranilate = 1-(2-carboxyphenylamino)-1-deoxy-D-ribulose 5-phosphate. The protein operates within amino-acid biosynthesis; L-tryptophan biosynthesis; L-tryptophan from chorismate: step 3/5. The chain is N-(5'-phosphoribosyl)anthranilate isomerase from Campylobacter jejuni subsp. jejuni serotype O:2 (strain ATCC 700819 / NCTC 11168).